The primary structure comprises 126 residues: Histone H2B type 2-E (126 aa).

Residues 1–12 (MPEPAKSAPAPK) are compositionally biased toward low complexity. The tract at residues 1-32 (MPEPAKSAPAPKKGSKKAVTKAQKKDGKKRKR) is disordered. Position 2 is an N-acetylproline (Pro-2). Position 3 is an ADP-ribosyl glutamic acid (Glu-3). Lys-6 is modified (N6-(2-hydroxyisobutyryl)lysine; alternate). Position 6 is an N6-(beta-hydroxybutyryl)lysine; alternate (Lys-6). Lys-6 is modified (N6-acetyllysine; alternate). Lys-6 is modified (N6-butyryllysine; alternate). The residue at position 6 (Lys-6) is an N6-crotonyllysine; alternate. Lys-6 bears the N6-lactoyllysine; alternate mark. Residue Lys-6 forms a Glycyl lysine isopeptide (Lys-Gly) (interchain with G-Cter in SUMO2); alternate linkage. Ser-7 carries the post-translational modification ADP-ribosylserine. Residue Lys-12 is modified to N6-(beta-hydroxybutyryl)lysine; alternate. An N6-acetyllysine; alternate mark is found at Lys-12 and Lys-13. 2 positions are modified to N6-crotonyllysine; alternate: Lys-12 and Lys-13. An N6-lactoyllysine; alternate modification is found at Lys-12. At Lys-13 the chain carries N6-(2-hydroxyisobutyryl)lysine; alternate. A Phosphoserine; by STK4/MST1 modification is found at Ser-15. Residues Lys-16, Lys-17, Lys-21, and Lys-24 each carry the N6-acetyllysine; alternate modification. An N6-crotonyllysine; alternate mark is found at Lys-16, Lys-17, Lys-21, and Lys-24. Lys-16, Lys-17, Lys-21, and Lys-24 each carry N6-lactoyllysine; alternate. Lys-17 bears the N6-glutaryllysine; alternate mark. Lys-21 and Lys-24 each carry N6-(2-hydroxyisobutyryl)lysine; alternate. An N6-(beta-hydroxybutyryl)lysine; alternate modification is found at Lys-21. Lys-21 carries the N6-butyryllysine; alternate modification. Lys-21 participates in a covalent cross-link: Glycyl lysine isopeptide (Lys-Gly) (interchain with G-Cter in SUMO2); alternate. The residue at position 25 (Lys-25) is an N6-(2-hydroxyisobutyryl)lysine. Lys-35 carries the N6-(2-hydroxyisobutyryl)lysine; alternate modification. Lys-35 carries the N6-(beta-hydroxybutyryl)lysine; alternate modification. Lys-35 carries the post-translational modification N6-crotonyllysine; alternate. Lys-35 is modified (N6-glutaryllysine; alternate). At Lys-35 the chain carries N6-succinyllysine; alternate. A Glycyl lysine isopeptide (Lys-Gly) (interchain with G-Cter in ubiquitin); alternate cross-link involves residue Lys-35. Glu-36 bears the PolyADP-ribosyl glutamic acid mark. Residue Ser-37 is modified to Phosphoserine; by AMPK. 3 positions are modified to N6-(2-hydroxyisobutyryl)lysine; alternate: Lys-44, Lys-47, and Lys-58. Lys-44 bears the N6-lactoyllysine; alternate mark. N6-glutaryllysine; alternate occurs at positions 44 and 47. Lys-47 bears the N6-methyllysine; alternate mark. Lys-58 carries the N6,N6-dimethyllysine; alternate modification. At Arg-80 the chain carries Dimethylated arginine. Residue Lys-86 is modified to N6-(2-hydroxyisobutyryl)lysine; alternate. Lys-86 is subject to N6-acetyllysine; alternate. Position 86 is an N6-lactoyllysine; alternate (Lys-86). Residue Lys-86 is modified to N6,N6,N6-trimethyllysine; alternate. 2 positions are modified to omega-N-methylarginine: Arg-87 and Arg-93. At Lys-109 the chain carries N6-(2-hydroxyisobutyryl)lysine; alternate. Lys-109 is modified (N6-lactoyllysine; alternate). Lys-109 bears the N6-glutaryllysine; alternate mark. N6-methyllysine; alternate is present on Lys-109. Ser-113 is a glycosylation site (O-linked (GlcNAc) serine). Phosphothreonine is present on Thr-116. An N6-(2-hydroxyisobutyryl)lysine; alternate mark is found at Lys-117 and Lys-121. The residue at position 117 (Lys-117) is an N6-(beta-hydroxybutyryl)lysine; alternate. Residues Lys-117 and Lys-121 each carry the N6-lactoyllysine; alternate modification. Residues Lys-117 and Lys-121 each carry the N6-glutaryllysine; alternate modification. Residues Lys-117 and Lys-121 each carry the N6-succinyllysine; alternate modification. N6-methylated lysine; alternate is present on Lys-117. Residue Lys-121 forms a Glycyl lysine isopeptide (Lys-Gly) (interchain with G-Cter in ubiquitin); alternate linkage.

It belongs to the histone H2B family. The nucleosome is a histone octamer containing two molecules each of H2A, H2B, H3 and H4 assembled in one H3-H4 heterotetramer and two H2A-H2B heterodimers. The octamer wraps approximately 147 bp of DNA. In terms of processing, monoubiquitination at Lys-35 (H2BK34Ub) by the MSL1/MSL2 dimer is required for histone H3 'Lys-4' (H3K4me) and 'Lys-79' (H3K79me) methylation and transcription activation at specific gene loci, such as HOXA9 and MEIS1 loci. Similarly, monoubiquitination at Lys-121 (H2BK120Ub) by the RNF20/40 complex gives a specific tag for epigenetic transcriptional activation and is also prerequisite for histone H3 'Lys-4' and 'Lys-79' methylation. It also functions cooperatively with the FACT dimer to stimulate elongation by RNA polymerase II. H2BK120Ub also acts as a regulator of mRNA splicing: deubiquitination by USP49 is required for efficient cotranscriptional splicing of a large set of exons. Post-translationally, phosphorylated on Ser-15 (H2BS14ph) by STK4/MST1 during apoptosis; which facilitates apoptotic chromatin condensation. Also phosphorylated on Ser-15 in response to DNA double strand breaks (DSBs), and in correlation with somatic hypermutation and immunoglobulin class-switch recombination. Phosphorylation at Ser-37 (H2BS36ph) by AMPK in response to stress promotes transcription. ADP-ribosylated by PARP1 or PARP2 on Ser-7 (H2BS6ADPr) in response to DNA damage. H2BS6ADPr promotes recruitment of CHD1L. Mono-ADP-ribosylated on Glu-3 (H2BE2ADPr) by PARP3 in response to single-strand breaks. Poly ADP-ribosylation on Glu-36 (H2BE35ADPr) by PARP1 regulates adipogenesis: it inhibits phosphorylation at Ser-37 (H2BS36ph), thereby blocking expression of pro-adipogenetic genes. In terms of processing, crotonylation (Kcr) is specifically present in male germ cells and marks testis-specific genes in post-meiotic cells, including X-linked genes that escape sex chromosome inactivation in haploid cells. Crotonylation marks active promoters and enhancers and confers resistance to transcriptional repressors. It is also associated with post-meiotically activated genes on autosomes. Post-translationally, glcNAcylation at Ser-113 promotes monoubiquitination of Lys-121. It fluctuates in response to extracellular glucose, and associates with transcribed genes. Lactylated in macrophages by EP300/P300 by using lactoyl-CoA directly derived from endogenous or exogenous lactate, leading to stimulates gene transcription.

It is found in the nucleus. It localises to the chromosome. In terms of biological role, core component of nucleosome. Nucleosomes wrap and compact DNA into chromatin, limiting DNA accessibility to the cellular machineries which require DNA as a template. Histones thereby play a central role in transcription regulation, DNA repair, DNA replication and chromosomal stability. DNA accessibility is regulated via a complex set of post-translational modifications of histones, also called histone code, and nucleosome remodeling. Has broad antibacterial activity. May contribute to the formation of the functional antimicrobial barrier of the colonic epithelium, and to the bactericidal activity of amniotic fluid. The sequence is that of Histone H2B type 2-E from Pongo abelii (Sumatran orangutan).